We begin with the raw amino-acid sequence, 221 residues long: MVSFSTLLTACTAITGALGTPDLDRRQNVTPNAQGTHNGYFYSWWSDGQSPVTYTNSAGGSYSVEWSSGGNLVGGKGWNPGSAKEIRYSASWQPTNNSNSYLTIYGWTRSPLVEYYIVESHGEYNPGSSAEPRGEIEAHGSIYKLYESTRVQQPSIDGTQTFQQYWAIRQTHRTSGTVTTGTFFNAWAAAGMPIGQHNYMIVATEAYNSAGRASVVVETPP.

Residues 1–19 form the signal peptide; sequence MVSFSTLLTACTAITGALG. The GH11 domain maps to 28–218; that stretch reads NVTPNAQGTH…SAGRASVVVE (191 aa). Asparagine 96 carries N-linked (GlcNAc...) asparagine glycosylation. Glutamate 114 acts as the Nucleophile in catalysis. The active-site Proton donor is the glutamate 205.

The protein belongs to the glycosyl hydrolase 11 (cellulase G) family.

The enzyme catalyses Endohydrolysis of (1-&gt;4)-beta-D-xylosidic linkages in xylans.. The protein operates within glycan degradation; xylan degradation. In terms of biological role, endo-1,4-beta-xylanase involved in the hydrolysis of xylan, a major structural heterogeneous polysaccharide found in plant biomass representing the second most abundant polysaccharide in the biosphere, after cellulose. May act as an elicitor of plant defense responses in certain plants but does not exhibit any cell death when transiently expressed in N.benthamiana. The chain is Ethylene-inducing xylanase 4 from Verticillium dahliae (strain VdLs.17 / ATCC MYA-4575 / FGSC 10137) (Verticillium wilt).